The following is a 289-amino-acid chain: Elongation factor Ts (289 aa).

The tract at residues 82–85 (TDFL) is involved in Mg(2+) ion dislocation from EF-Tu.

It belongs to the EF-Ts family.

It localises to the cytoplasm. Its function is as follows. Associates with the EF-Tu.GDP complex and induces the exchange of GDP to GTP. It remains bound to the aminoacyl-tRNA.EF-Tu.GTP complex up to the GTP hydrolysis stage on the ribosome. The sequence is that of Elongation factor Ts from Pseudomonas paraeruginosa (strain DSM 24068 / PA7) (Pseudomonas aeruginosa (strain PA7)).